Reading from the N-terminus, the 155-residue chain is Transcription antitermination protein NusB (155 aa).

It belongs to the NusB family.

Involved in transcription antitermination. Required for transcription of ribosomal RNA (rRNA) genes. Binds specifically to the boxA antiterminator sequence of the ribosomal RNA (rrn) operons. In Azoarcus sp. (strain BH72), this protein is Transcription antitermination protein NusB.